Here is a 1433-residue protein sequence, read N- to C-terminus: Bacillopeptidase F (1433 aa).

The N-terminal stretch at 1–30 (MRKKTKNRLISSVLSTVVISSLLFPGAAGA) is a signal peptide. A propeptide spanning residues 31 to 194 (SSKVTSPSVK…NMKKAQKAIK (164 aa)) is cleaved from the precursor. The region spanning 68–177 (TFLIKFKDLA…KVLPNEKRQL (110 aa)) is the Inhibitor I9 domain. One can recognise a Peptidase S8 domain in the interval 200-512 (EWNVDQIDAP…HGLVNAFDAV (313 aa)). Active-site charge relay system residues include Asp227, His274, and Ser452. Positions 756 to 1433 (SAYKGQNIQV…NGKLNMNTEN (678 aa)) are excised as a propeptide. The disordered stretch occupies residues 800 to 830 (KLGVEKPSGKQKKKPVNPKKAKPSANTAVKH). Residues 808 to 821 (GKQKKKPVNPKKAK) are compositionally biased toward basic residues.

It belongs to the peptidase S8 family.

It localises to the secreted. The polypeptide is Bacillopeptidase F (bpr) (Bacillus subtilis (strain 168)).